The following is a 217-amino-acid chain: Small ribosomal subunit protein uS3 (217 aa).

Residues 38-106 form the KH type-2 domain; that stretch reads IRKFINKELA…QVHINIIEIK (69 aa).

It belongs to the universal ribosomal protein uS3 family. In terms of assembly, part of the 30S ribosomal subunit. Forms a tight complex with proteins S10 and S14.

Functionally, binds the lower part of the 30S subunit head. Binds mRNA in the 70S ribosome, positioning it for translation. The polypeptide is Small ribosomal subunit protein uS3 (Streptococcus pyogenes serotype M6 (strain ATCC BAA-946 / MGAS10394)).